Here is a 370-residue protein sequence, read N- to C-terminus: Chorismate synthase (370 aa).

Arg48 and Arg54 together coordinate NADP(+). FMN-binding positions include 130–132 (RSS), 242–243 (NA), Gly287, 302–306 (KPTSS), and Arg328.

Belongs to the chorismate synthase family. In terms of assembly, homotetramer. The cofactor is FMNH2.

The catalysed reaction is 5-O-(1-carboxyvinyl)-3-phosphoshikimate = chorismate + phosphate. Its pathway is metabolic intermediate biosynthesis; chorismate biosynthesis; chorismate from D-erythrose 4-phosphate and phosphoenolpyruvate: step 7/7. Catalyzes the anti-1,4-elimination of the C-3 phosphate and the C-6 proR hydrogen from 5-enolpyruvylshikimate-3-phosphate (EPSP) to yield chorismate, which is the branch point compound that serves as the starting substrate for the three terminal pathways of aromatic amino acid biosynthesis. This reaction introduces a second double bond into the aromatic ring system. The chain is Chorismate synthase from Xanthobacter autotrophicus (strain ATCC BAA-1158 / Py2).